An 844-amino-acid polypeptide reads, in one-letter code: DNA mismatch repair protein MutS (844 aa).

610–617 (GPNMGGKS) lines the ATP pocket.

Belongs to the DNA mismatch repair MutS family.

In terms of biological role, this protein is involved in the repair of mismatches in DNA. It is possible that it carries out the mismatch recognition step. This protein has a weak ATPase activity. This is DNA mismatch repair protein MutS from Francisella tularensis subsp. mediasiatica (strain FSC147).